The sequence spans 511 residues: Bifunctional purine biosynthesis protein PurH (511 aa).

Residues M1–V145 enclose the MGS-like domain.

The protein belongs to the PurH family.

It catalyses the reaction (6R)-10-formyltetrahydrofolate + 5-amino-1-(5-phospho-beta-D-ribosyl)imidazole-4-carboxamide = 5-formamido-1-(5-phospho-D-ribosyl)imidazole-4-carboxamide + (6S)-5,6,7,8-tetrahydrofolate. The enzyme catalyses IMP + H2O = 5-formamido-1-(5-phospho-D-ribosyl)imidazole-4-carboxamide. It participates in purine metabolism; IMP biosynthesis via de novo pathway; 5-formamido-1-(5-phospho-D-ribosyl)imidazole-4-carboxamide from 5-amino-1-(5-phospho-D-ribosyl)imidazole-4-carboxamide (10-formyl THF route): step 1/1. It functions in the pathway purine metabolism; IMP biosynthesis via de novo pathway; IMP from 5-formamido-1-(5-phospho-D-ribosyl)imidazole-4-carboxamide: step 1/1. The protein is Bifunctional purine biosynthesis protein PurH of Bacillus cereus (strain ATCC 14579 / DSM 31 / CCUG 7414 / JCM 2152 / NBRC 15305 / NCIMB 9373 / NCTC 2599 / NRRL B-3711).